We begin with the raw amino-acid sequence, 185 residues long: Ribosome-recycling factor (185 aa).

Belongs to the RRF family.

The protein localises to the cytoplasm. Functionally, responsible for the release of ribosomes from messenger RNA at the termination of protein biosynthesis. May increase the efficiency of translation by recycling ribosomes from one round of translation to another. The sequence is that of Ribosome-recycling factor from Chloroflexus aggregans (strain MD-66 / DSM 9485).